We begin with the raw amino-acid sequence, 370 residues long: Anhydro-N-acetylmuramic acid kinase (370 aa).

Gly-13 to Asp-20 provides a ligand contact to ATP.

The protein belongs to the anhydro-N-acetylmuramic acid kinase family.

The enzyme catalyses 1,6-anhydro-N-acetyl-beta-muramate + ATP + H2O = N-acetyl-D-muramate 6-phosphate + ADP + H(+). It functions in the pathway amino-sugar metabolism; 1,6-anhydro-N-acetylmuramate degradation. Its pathway is cell wall biogenesis; peptidoglycan recycling. Its function is as follows. Catalyzes the specific phosphorylation of 1,6-anhydro-N-acetylmuramic acid (anhMurNAc) with the simultaneous cleavage of the 1,6-anhydro ring, generating MurNAc-6-P. Is required for the utilization of anhMurNAc either imported from the medium or derived from its own cell wall murein, and thus plays a role in cell wall recycling. In Shewanella frigidimarina (strain NCIMB 400), this protein is Anhydro-N-acetylmuramic acid kinase.